The sequence spans 119 residues: Holo-[acyl-carrier-protein] synthase (119 aa).

2 residues coordinate Mg(2+): Asp-8 and Glu-60.

Belongs to the P-Pant transferase superfamily. AcpS family. Mg(2+) is required as a cofactor.

It localises to the cytoplasm. It catalyses the reaction apo-[ACP] + CoA = holo-[ACP] + adenosine 3',5'-bisphosphate + H(+). Functionally, transfers the 4'-phosphopantetheine moiety from coenzyme A to a Ser of acyl-carrier-protein. This Staphylococcus haemolyticus (strain JCSC1435) protein is Holo-[acyl-carrier-protein] synthase.